The following is a 126-amino-acid chain: Small ribosomal subunit protein uS11 (126 aa).

This sequence belongs to the universal ribosomal protein uS11 family. Part of the 30S ribosomal subunit. Interacts with proteins S7 and S18. Binds to IF-3.

In terms of biological role, located on the platform of the 30S subunit, it bridges several disparate RNA helices of the 16S rRNA. Forms part of the Shine-Dalgarno cleft in the 70S ribosome. This Orientia tsutsugamushi (strain Boryong) (Rickettsia tsutsugamushi) protein is Small ribosomal subunit protein uS11.